The chain runs to 177 residues: Bifunctional protein PyrR (177 aa).

Positions Val-99 to Thr-111 match the PRPP-binding motif.

The protein belongs to the purine/pyrimidine phosphoribosyltransferase family. PyrR subfamily.

The enzyme catalyses UMP + diphosphate = 5-phospho-alpha-D-ribose 1-diphosphate + uracil. Functionally, regulates the transcription of the pyrimidine nucleotide (pyr) operon in response to exogenous pyrimidines. Also displays a weak uracil phosphoribosyltransferase activity which is not physiologically significant. In Geobacter sp. (strain M21), this protein is Bifunctional protein PyrR.